A 172-amino-acid polypeptide reads, in one-letter code: Large ribosomal subunit protein bL17m (172 aa).

A mitochondrion-targeting transit peptide spans 1-8 (MRLSFAAA).

It belongs to the bacterial ribosomal protein bL17 family. In terms of assembly, component of the mitochondrial ribosome large subunit (39S) which comprises a 16S rRNA and about 50 distinct proteins.

It is found in the mitochondrion. The protein is Large ribosomal subunit protein bL17m (MRPL17) of Bos taurus (Bovine).